The primary structure comprises 246 residues: UDP-N-acetyl-D-mannosaminuronic acid transferase (246 aa).

This sequence belongs to the glycosyltransferase 26 family.

The catalysed reaction is UDP-N-acetyl-alpha-D-mannosaminouronate + N-acetyl-alpha-D-glucosaminyl-di-trans,octa-cis-undecaprenyl diphosphate = beta-D-ManNAcA-(1-&gt;4)-alpha-D-GlcNAc-di-trans,octa-cis-undecaprenyl diphosphate + UDP + H(+). It functions in the pathway bacterial outer membrane biogenesis; enterobacterial common antigen biosynthesis. Catalyzes the synthesis of Und-PP-GlcNAc-ManNAcA (Lipid II), the second lipid-linked intermediate involved in enterobacterial common antigen (ECA) synthesis. The sequence is that of UDP-N-acetyl-D-mannosaminuronic acid transferase from Escherichia fergusonii (strain ATCC 35469 / DSM 13698 / CCUG 18766 / IAM 14443 / JCM 21226 / LMG 7866 / NBRC 102419 / NCTC 12128 / CDC 0568-73).